The following is a 472-amino-acid chain: ATP synthase subunit beta (472 aa).

Residue 155-162 (GGAGVGKT) coordinates ATP.

The protein belongs to the ATPase alpha/beta chains family. As to quaternary structure, F-type ATPases have 2 components, CF(1) - the catalytic core - and CF(0) - the membrane proton channel. CF(1) has five subunits: alpha(3), beta(3), gamma(1), delta(1), epsilon(1). CF(0) has three main subunits: a(1), b(2) and c(9-12). The alpha and beta chains form an alternating ring which encloses part of the gamma chain. CF(1) is attached to CF(0) by a central stalk formed by the gamma and epsilon chains, while a peripheral stalk is formed by the delta and b chains.

It is found in the cell inner membrane. The enzyme catalyses ATP + H2O + 4 H(+)(in) = ADP + phosphate + 5 H(+)(out). Produces ATP from ADP in the presence of a proton gradient across the membrane. The catalytic sites are hosted primarily by the beta subunits. The polypeptide is ATP synthase subunit beta (Fervidobacterium nodosum (strain ATCC 35602 / DSM 5306 / Rt17-B1)).